Reading from the N-terminus, the 656-residue chain is uncharacterized protein (656 aa).

Residues 623-656 (EIDIPGTPASIDPEWSRPPGSITDDHVFDAPLHR) are disordered. A compositionally biased stretch (basic and acidic residues) spans 645-656 (TDDHVFDAPLHR).

This is an uncharacterized protein from Mycobacterium tuberculosis (strain ATCC 25618 / H37Rv).